A 63-amino-acid polypeptide reads, in one-letter code: MAQEQTRRGGGGDDDEFTSSTSVGQERREKLTEETDDLLDEIDDVLEENAEDFVRAYVQKGGQ.

The segment covering 1-11 has biased composition (basic and acidic residues); it reads MAQEQTRRGGG. A disordered region spans residues 1-36; the sequence is MAQEQTRRGGGGDDDEFTSSTSVGQERREKLTEETD. The tract at residues 20–57 is ARC ATPase binding; sequence STSVGQERREKLTEETDDLLDEIDDVLEENAEDFVRAY. Positions 23–51 form a coiled coil; the sequence is VGQERREKLTEETDDLLDEIDDVLEENAE. Q63 bears the Deamidated glutamine mark. Residue Q63 forms an Isoglutamyl lysine isopeptide (Gln-Lys) (interchain with K-? in acceptor proteins) linkage.

This sequence belongs to the prokaryotic ubiquitin-like protein family. In terms of assembly, strongly interacts with the proteasome-associated ATPase ARC through a hydrophobic interface; the interacting region of Pup lies in its C-terminal half. There is one Pup binding site per ARC hexamer ring. In terms of processing, is modified by deamidation of its C-terminal glutamine to glutamate by the deamidase Dop, a prerequisite to the subsequent pupylation process.

It functions in the pathway protein degradation; proteasomal Pup-dependent pathway. In terms of biological role, protein modifier that is covalently attached to lysine residues of substrate proteins, thereby targeting them for proteasomal degradation. The tagging system is termed pupylation. This Mycobacterium leprae (strain Br4923) protein is Prokaryotic ubiquitin-like protein Pup.